Here is a 616-residue protein sequence, read N- to C-terminus: Chaperone protein HscA (616 aa).

Belongs to the heat shock protein 70 family.

Its function is as follows. Chaperone involved in the maturation of iron-sulfur cluster-containing proteins. Has a low intrinsic ATPase activity which is markedly stimulated by HscB. Involved in the maturation of IscU. In Salmonella agona (strain SL483), this protein is Chaperone protein HscA.